The following is a 124-amino-acid chain: MLRQFGGVFRNLRVPERTNALLFAQHKGDERHSGQRAFDGSKFRLEAKRCFTAICIITVARRDRLGVLVCGKNTASTLPYLPANRIFRLPKVQIRKMFPIGCATFLSREYIITALLVSYCHLCV.

This is an uncharacterized protein from Saccharomyces cerevisiae (strain ATCC 204508 / S288c) (Baker's yeast).